The chain runs to 389 residues: 5-hydroxytryptamine receptor 1B (389 aa).

Positions 1–27 (MEDAGTPCAPPPPAGSQTGAPPANLSS) are disordered. At 1–45 (MEDAGTPCAPPPPAGSQTGAPPANLSSAPHNCSAEGYIYQDSIAL) the chain is on the extracellular side. Polar residues predominate over residues 15–27 (GSQTGAPPANLSS). N-linked (GlcNAc...) asparagine glycans are attached at residues Asn-24 and Asn-31. Residues 46–71 (PWKVLLAILLALLTLATTLSNAFVIA) form a helical membrane-spanning segment. Residues 72 to 85 (TVYRTRKLHTPANY) are Cytoplasmic-facing. The chain crosses the membrane as a helical span at residues 86 to 110 (LIASLAVTDLLVSILVMPISTMYAV). The Extracellular portion of the chain corresponds to 111–118 (TGRWTLGQ). Residues 119–144 (VVCDLWLSSDITCCTASILHLCVIAL) form a helical membrane-spanning segment. Cysteines 121 and 198 form a disulfide. Ergotamine-binding residues include Asp-128 and Thr-133. The DRY motif; important for ligand-induced conformation changes and signaling motif lies at 145 to 147 (DRY). Residues 145–164 (DRYWAITDAVEYSAKRTPKR) are Cytoplasmic-facing. Residues 165–183 (AAVMIALVWVFSISISLPP) form a helical membrane-spanning segment. At 184–204 (FFWRQAKAEEEVSDCVVNTDH) the chain is on the extracellular side. Val-200 lines the ergotamine pocket. The helical transmembrane segment at 205-228 (ILYTVYSTVGAFYFPTLLLIALYG) threads the bilayer. Residues 229 to 314 (RIYVEARSRI…AARERKATKT (86 aa)) lie on the Cytoplasmic side of the membrane. Residues 258–271 (DSPGSTSSVTSVNS) are compositionally biased toward polar residues. A disordered region spans residues 258–281 (DSPGSTSSVTSVNSRAPDVPSESG). Residues 315–336 (LGIILGAFIVCWLPFFIISLVM) form a helical membrane-spanning segment. Over 337 to 346 (PICKDACWFH) the chain is Extracellular. Residues 347-369 (LAIFDFFTWLGYLNSLINPIIYT) form a helical membrane-spanning segment. An NPxxY motif; important for ligand-induced conformation changes and signaling motif is present at residues 364 to 368 (NPIIY). Topologically, residues 370–389 (MSNEDFKQAFHKLIRFKCAS) are cytoplasmic. Cys-387 is lipidated: S-palmitoyl cysteine.

It belongs to the G-protein coupled receptor 1 family. Homodimer. Heterodimer with HTR1D. Post-translationally, phosphorylated. Desensitization of the receptor may be mediated by its phosphorylation. Palmitoylated.

The protein localises to the cell membrane. In terms of biological role, G-protein coupled receptor for 5-hydroxytryptamine (serotonin). Also functions as a receptor for ergot alkaloid derivatives, various anxiolytic and antidepressant drugs and other psychoactive substances, such as lysergic acid diethylamide (LSD). Ligand binding causes a conformation change that triggers signaling via guanine nucleotide-binding proteins (G proteins) and modulates the activity of downstream effectors, such as adenylate cyclase. HTR1B is coupled to G(i)/G(o) G alpha proteins and mediates inhibitory neurotransmission by inhibiting adenylate cyclase activity. Arrestin family members inhibit signaling via G proteins and mediate activation of alternative signaling pathways. Regulates the release of 5-hydroxytryptamine, dopamine and acetylcholine in the brain, and thereby affects neural activity, nociceptive processing, pain perception, mood and behavior. Besides, plays a role in vasoconstriction of cerebral arteries. The sequence is that of 5-hydroxytryptamine receptor 1B (HTR1B) from Vulpes vulpes (Red fox).